Reading from the N-terminus, the 155-residue chain is Ribosomal RNA large subunit methyltransferase H (155 aa).

S-adenosyl-L-methionine contacts are provided by residues L72, G103, and 122–127 (LSPLTL).

The protein belongs to the RNA methyltransferase RlmH family. Homodimer.

It localises to the cytoplasm. It carries out the reaction pseudouridine(1915) in 23S rRNA + S-adenosyl-L-methionine = N(3)-methylpseudouridine(1915) in 23S rRNA + S-adenosyl-L-homocysteine + H(+). Functionally, specifically methylates the pseudouridine at position 1915 (m3Psi1915) in 23S rRNA. In Aeromonas salmonicida (strain A449), this protein is Ribosomal RNA large subunit methyltransferase H.